A 401-amino-acid polypeptide reads, in one-letter code: MVYVAFNKKTIEDIDVKGRKVLVRCDFNVPLKDGKITDENRLMGALPTIKYIMEKGGKVILCSHLGKPKGEPKQELSLAPVAKRLSELLNKEVLFPADNEVVGENAKKAVENMKDGDVILLQNTRYRKEETKNEETFSKELASLADIFVNDAFGTAHRAHCSTVGVTEFVATSVCGYLIQKELKFLGNAVENPQRPFISILGGAKVSDKINVINNLLEKVDTLIIGGGMSYTFQKAQGYTIGSSLLEEDKIDYAKEMIEKAKEKGVKLLLPVDNVAAEKFAEDAEAIITEDQNIKEGYMGLDIGPKTSKLYSQEVQSAKTVVWNGPMGVFEFEKFAKGTIEVAKAMAESQATTIIGGGDSAAAVNQLGFGDKMTHISTGGGASLEFLEGKELPGIAALNDK.

Residues 26 to 28 (DFN), Arg41, 64 to 67 (HLGK), Arg125, and Arg158 each bind substrate. Residues Lys209, Gly300, Glu331, and 357 to 360 (GGDS) each bind ATP.

The protein belongs to the phosphoglycerate kinase family. As to quaternary structure, monomer.

The protein resides in the cytoplasm. It carries out the reaction (2R)-3-phosphoglycerate + ATP = (2R)-3-phospho-glyceroyl phosphate + ADP. It functions in the pathway carbohydrate degradation; glycolysis; pyruvate from D-glyceraldehyde 3-phosphate: step 2/5. The protein is Phosphoglycerate kinase of Clostridium tetani (strain Massachusetts / E88).